Reading from the N-terminus, the 425-residue chain is uncharacterized protein (425 aa).

The TRAM domain occupies 1-57 (MKDKPLKLTVEKLVYGGYGFSRLNGKAVFVRFASPKELVEAKVVKEKKDYTEAVVTK). Residues cysteine 70, cysteine 76, cysteine 79, and cysteine 153 each coordinate [4Fe-4S] cluster. Residues glutamine 260, aspartate 308, and aspartate 354 each contribute to the S-adenosyl-L-methionine site. The Nucleophile role is filled by cysteine 381.

This sequence belongs to the class I-like SAM-binding methyltransferase superfamily. RNA M5U methyltransferase family.

This is an uncharacterized protein from Aquifex aeolicus (strain VF5).